Reading from the N-terminus, the 220-residue chain is Uracil phosphoribosyltransferase 2 (220 aa).

77 to 80 (ARDI) is a binding site for GTP. Residues Arg-87 and Arg-113 each coordinate 5-phospho-alpha-D-ribose 1-diphosphate. Arg-134 serves as a coordination point for GTP. 5-phospho-alpha-D-ribose 1-diphosphate contacts are provided by residues Asp-140 and 140–148 (DPLLATGNS). Tyr-204 is a binding site for D-ribose 5-phosphate. Uracil is bound by residues Val-205 and 210 to 212 (GDF). Asp-211 serves as a coordination point for 5-phospho-alpha-D-ribose 1-diphosphate.

It belongs to the UPRTase family. Mg(2+) is required as a cofactor.

It catalyses the reaction UMP + diphosphate = 5-phospho-alpha-D-ribose 1-diphosphate + uracil. The protein operates within pyrimidine metabolism; UMP biosynthesis via salvage pathway; UMP from uracil: step 1/1. Its activity is regulated as follows. Allosterically activated by GTP. In terms of biological role, catalyzes the conversion of uracil and 5-phospho-alpha-D-ribose 1-diphosphate (PRPP) to UMP and diphosphate. The chain is Uracil phosphoribosyltransferase 2 from Schizosaccharomyces pombe (strain 972 / ATCC 24843) (Fission yeast).